Reading from the N-terminus, the 364-residue chain is DNA polymerase IV (364 aa).

In terms of domain architecture, UmuC spans 6 to 194 (VFHIDFDYFY…LKIRDIPGIG (189 aa)). Residues Asp10 and Asp111 each contribute to the Mg(2+) site. Residue Glu112 is part of the active site.

It belongs to the DNA polymerase type-Y family. In terms of assembly, monomer. It depends on Mg(2+) as a cofactor.

The protein localises to the cytoplasm. The catalysed reaction is DNA(n) + a 2'-deoxyribonucleoside 5'-triphosphate = DNA(n+1) + diphosphate. Its function is as follows. Poorly processive, error-prone DNA polymerase involved in untargeted mutagenesis. Copies undamaged DNA at stalled replication forks, which arise in vivo from mismatched or misaligned primer ends. These misaligned primers can be extended by PolIV. Exhibits no 3'-5' exonuclease (proofreading) activity. May be involved in translesional synthesis. In Nitrosopumilus maritimus (strain SCM1), this protein is DNA polymerase IV.